Reading from the N-terminus, the 82-residue chain is Myosin light chain alkali (82 aa).

Positions 7–42 (GCYEDFIECLKLYDKEENGTMLLAELQHALLALGEN) constitute an EF-hand domain.

Myosin is a hexamer of 2 heavy chains and 4 light chains.

In Drosophila teissieri (Fruit fly), this protein is Myosin light chain alkali (Mlc1).